We begin with the raw amino-acid sequence, 544 residues long: CTP synthase (544 aa).

Positions 1-267 (MAKFVFVTGG…CRQVLDVLSL (267 aa)) are amidoligase domain. A CTP-binding site is contributed by Ser-13. Ser-13 contacts UTP. ATP is bound by residues 14-19 (SIGKGI) and Asp-71. The Mg(2+) site is built by Asp-71 and Glu-141. CTP is bound by residues 148–150 (DIE), 188–193 (KTKPTQ), and Lys-224. Residues 188-193 (KTKPTQ) and Lys-224 each bind UTP. In terms of domain architecture, Glutamine amidotransferase type-1 spans 292–534 (KVALVGKYVQ…IQAASQRLPQ (243 aa)). Gly-354 serves as a coordination point for L-glutamine. The active-site Nucleophile; for glutamine hydrolysis is Cys-381. L-glutamine-binding positions include 382–385 (LGMQ), Glu-405, and Arg-462. Residues His-507 and Glu-509 contribute to the active site.

This sequence belongs to the CTP synthase family. As to quaternary structure, homotetramer.

The enzyme catalyses UTP + L-glutamine + ATP + H2O = CTP + L-glutamate + ADP + phosphate + 2 H(+). It catalyses the reaction L-glutamine + H2O = L-glutamate + NH4(+). The catalysed reaction is UTP + NH4(+) + ATP = CTP + ADP + phosphate + 2 H(+). It functions in the pathway pyrimidine metabolism; CTP biosynthesis via de novo pathway; CTP from UDP: step 2/2. Its activity is regulated as follows. Allosterically activated by GTP, when glutamine is the substrate; GTP has no effect on the reaction when ammonia is the substrate. The allosteric effector GTP functions by stabilizing the protein conformation that binds the tetrahedral intermediate(s) formed during glutamine hydrolysis. Inhibited by the product CTP, via allosteric rather than competitive inhibition. In terms of biological role, catalyzes the ATP-dependent amination of UTP to CTP with either L-glutamine or ammonia as the source of nitrogen. Regulates intracellular CTP levels through interactions with the four ribonucleotide triphosphates. In Synechococcus sp. (strain RCC307), this protein is CTP synthase.